Here is a 101-residue protein sequence, read N- to C-terminus: Small ribosomal subunit protein uS14 (101 aa).

It belongs to the universal ribosomal protein uS14 family. As to quaternary structure, part of the 30S ribosomal subunit. Contacts proteins S3 and S10.

Binds 16S rRNA, required for the assembly of 30S particles and may also be responsible for determining the conformation of the 16S rRNA at the A site. The polypeptide is Small ribosomal subunit protein uS14 (Dinoroseobacter shibae (strain DSM 16493 / NCIMB 14021 / DFL 12)).